The sequence spans 66 residues: Large ribosomal subunit protein uL29 (66 aa).

The protein belongs to the universal ribosomal protein uL29 family.

The polypeptide is Large ribosomal subunit protein uL29 (Ruegeria sp. (strain TM1040) (Silicibacter sp.)).